The chain runs to 93 residues: Phosphoribosyl-ATP pyrophosphatase (93 aa).

It belongs to the PRA-PH family.

It is found in the cytoplasm. The enzyme catalyses 1-(5-phospho-beta-D-ribosyl)-ATP + H2O = 1-(5-phospho-beta-D-ribosyl)-5'-AMP + diphosphate + H(+). Its pathway is amino-acid biosynthesis; L-histidine biosynthesis; L-histidine from 5-phospho-alpha-D-ribose 1-diphosphate: step 2/9. The protein is Phosphoribosyl-ATP pyrophosphatase of Mycobacterium avium (strain 104).